Here is a 287-residue protein sequence, read N- to C-terminus: Leukocyte-associated immunoglobulin-like receptor 1 (287 aa).

Positions Met-1–Thr-21 are cleaved as a signal peptide. The Extracellular portion of the chain corresponds to Gln-22 to Tyr-165. The 89-residue stretch at Pro-29–Glu-117 folds into the Ig-like C2-type domain. Cys-49 and Cys-101 form a disulfide bridge. The N-linked (GlcNAc...) asparagine glycan is linked to Asn-69. Residues Lys-121 to Ala-155 are disordered. A compositionally biased stretch (polar residues) spans Pro-134–Ser-145. A helical transmembrane segment spans residues Ile-166–Leu-186. At His-187–His-287 the chain is on the cytoplasmic side. Residues Ile-192–Asp-211 form a disordered region. Residues Arg-198 to Gln-208 are compositionally biased toward basic and acidic residues. Short sequence motifs (ITIM motif) lie at residues Val-249–Leu-254 and Ile-279–Val-284. 2 positions are modified to phosphotyrosine: Tyr-251 and Tyr-281.

As to quaternary structure, interacts with SH2 domains of tyrosine-protein phosphatases PTPN6 and PTPN11. The interaction with PTPN6 is constitutive. Interacts with the SH2 domain of CSK. Binds with high affinity to extracellular matrix collagens, the interaction is functionally important. Post-translationally, phosphorylation at Tyr-251 and Tyr-281 activates it. May be phosphorylated by LCK. N-glycosylated. In terms of tissue distribution, expressed on the majority of peripheral mononuclear cells, including natural killer (NK) cells, T-cells, B-cells, monocytes, and dendritic cells. Highly expressed in naive T-cells and B-cells but no expression on germinal center B-cells. Abnormally low expression in naive B-cells from HIV-1 infected patients. Very low expression in NK cells from a patient with chronic active Epstein-Barr virus infection.

The protein localises to the cell membrane. Functionally, functions as an inhibitory receptor that plays a constitutive negative regulatory role on cytolytic function of natural killer (NK) cells, B-cells and T-cells. Activation by Tyr phosphorylation results in recruitment and activation of the phosphatases PTPN6 and PTPN11. It also reduces the increase of intracellular calcium evoked by B-cell receptor ligation. May also play its inhibitory role independently of SH2-containing phosphatases. Modulates cytokine production in CD4+ T-cells, down-regulating IL2 and IFNG production while inducing secretion of transforming growth factor beta. Also down-regulates IgG and IgE production in B-cells as well as IL8, IL10 and TNF secretion. Inhibits proliferation and induces apoptosis in myeloid leukemia cell lines as well as prevents nuclear translocation of NF-kappa-B p65 subunit/RELA and phosphorylation of I-kappa-B alpha/CHUK in these cells. Inhibits the differentiation of peripheral blood precursors towards dendritic cells. The protein is Leukocyte-associated immunoglobulin-like receptor 1 (LAIR1) of Homo sapiens (Human).